A 98-amino-acid chain; its full sequence is NADH-ubiquinone oxidoreductase chain 4L (98 aa).

3 helical membrane passes run 1–21 (MSSI…GLLM), 29–49 (SLLC…VTML), and 61–81 (VMLM…LVTV).

Belongs to the complex I subunit 4L family. In terms of assembly, core subunit of respiratory chain NADH dehydrogenase (Complex I) which is composed of 45 different subunits.

The protein localises to the mitochondrion inner membrane. It carries out the reaction a ubiquinone + NADH + 5 H(+)(in) = a ubiquinol + NAD(+) + 4 H(+)(out). Core subunit of the mitochondrial membrane respiratory chain NADH dehydrogenase (Complex I) which catalyzes electron transfer from NADH through the respiratory chain, using ubiquinone as an electron acceptor. Part of the enzyme membrane arm which is embedded in the lipid bilayer and involved in proton translocation. The protein is NADH-ubiquinone oxidoreductase chain 4L (MT-ND4L) of Tamandua tetradactyla (Southern anteater).